Here is a 447-residue protein sequence, read N- to C-terminus: Multicopper oxidase mco (447 aa).

The span at 1–25 (MMNMKEDKKNTMDMKNMKHHDERKK) shows a compositional bias: basic and acidic residues. The interval 1–28 (MMNMKEDKKNTMDMKNMKHHDERKKLNS) is disordered. Cu cation contacts are provided by H107, H109, H147, H149, H375, H378, H380, H428, C429, H430, H434, and M439.

Belongs to the multicopper oxidase family. Requires Cu cation as cofactor.

It is found in the cytoplasm. Functionally, may be involved in copper homeostasis and oxidative stress response. In Staphylococcus epidermidis (strain ATCC 12228 / FDA PCI 1200), this protein is Multicopper oxidase mco (mco).